We begin with the raw amino-acid sequence, 417 residues long: Calreticulin (417 aa).

The first 17 residues, 1 to 17 (MLLSVPLLLGLLGLAAA), serve as a signal peptide directing secretion. Residues 18–197 (EPAVYFKEQF…NSQVESGSLE (180 aa)) form an N-domain region. Gln-26 provides a ligand contact to Ca(2+). Lys-48 carries the N6-acetyllysine modification. Lys-62 and Lys-64 together coordinate Ca(2+). Cys-105 and Cys-137 are joined by a disulfide. Residues Tyr-109, Lys-111, Tyr-128, and Asp-135 each coordinate an alpha-D-glucoside. Position 159 is an N6-acetyllysine (Lys-159). The stretch at 191–202 (VESGSLEDDWDF) is one 1-1 repeat. The segment at 191 to 255 (VESGSLEDDW…DAKKPEDWDE (65 aa)) is 4 X approximate repeats. A disordered region spans residues 193 to 278 (SGSLEDDWDF…PEYKGEWKPR (86 aa)). The interval 198–308 (DDWDFLPPKK…YSPDPSIYAY (111 aa)) is P-domain. Positions 207–251 (KIKDPDASKPEDWDERAKIDDPTDSKPEDWDKPEHIPDPDAKKPE) are enriched in basic and acidic residues. N6-acetyllysine is present on Lys-209. A run of 6 repeats spans residues 210–221 (DPDASKPEDWDE), 227–238 (DPTDSKPEDWDK), 244–255 (DPDAKKPEDWDE), 259–269 (GEWEPPVIQNP), 273–283 (GEWKPRQIDNP), and 287–297 (GTWIHPEIDNP). The interval 237–270 (DKPEHIPDPDAKKPEDWDEEMDGEWEPPVIQNPE) is interaction with PPIB. The span at 252-261 (DWDEEMDGEW) shows a compositional bias: acidic residues. Residues 259-297 (GEWEPPVIQNPEYKGEWKPRQIDNPDYKGTWIHPEIDNP) form a 3 X approximate repeats region. The tract at residues 309–417 (DNFGVLGLDL…DVPGQAKDEL (109 aa)) is C-domain. Asp-317 is a binding site for an alpha-D-glucoside. Residue Asp-328 participates in Ca(2+) binding. The tract at residues 350 to 417 (TKAAEKQMKD…DVPGQAKDEL (68 aa)) is disordered. Basic and acidic residues predominate over residues 352–379 (AAEKQMKDKQDEEQRLKEEEEDKKRKEE). The span at 380–409 (EEAEDKEDDEDKDEDEEDEEDKEEDEEEDV) shows a compositional bias: acidic residues. Positions 414–417 (KDEL) match the Prevents secretion from ER motif.

The protein belongs to the calreticulin family. In terms of assembly, monomer. Component of an EIF2 complex at least composed of CELF1/CUGBP1, CALR, CALR3, EIF2S1, EIF2S2, HSP90B1 and HSPA5. Interacts with PDIA3/ERp57 and SPACA9. Interacts with TRIM21. Interacts with NR3C1. Interacts with PPIB. Interacts (via P-domain) with PDIA5. Interacts with GABARAP. Interacts with CLCC1.

Its subcellular location is the endoplasmic reticulum lumen. The protein localises to the cytoplasm. It localises to the cytosol. It is found in the secreted. The protein resides in the extracellular space. Its subcellular location is the extracellular matrix. The protein localises to the cell surface. It localises to the sarcoplasmic reticulum lumen. It is found in the cytoplasmic vesicle. The protein resides in the secretory vesicle. Its subcellular location is the cortical granule. The protein localises to the cytoplasmic granule. Calcium-binding chaperone that promotes folding, oligomeric assembly and quality control in the endoplasmic reticulum (ER) via the calreticulin/calnexin cycle. This lectin interacts transiently with almost all of the monoglucosylated glycoproteins that are synthesized in the ER. Interacts with the DNA-binding domain of NR3C1 and mediates its nuclear export. Involved in maternal gene expression regulation. May participate in oocyte maturation via the regulation of calcium homeostasis. The protein is Calreticulin (CALR) of Chlorocebus aethiops (Green monkey).